A 427-amino-acid chain; its full sequence is Gamma-glutamyl phosphate reductase (427 aa).

It belongs to the gamma-glutamyl phosphate reductase family.

It is found in the cytoplasm. The catalysed reaction is L-glutamate 5-semialdehyde + phosphate + NADP(+) = L-glutamyl 5-phosphate + NADPH + H(+). It functions in the pathway amino-acid biosynthesis; L-proline biosynthesis; L-glutamate 5-semialdehyde from L-glutamate: step 2/2. Catalyzes the NADPH-dependent reduction of L-glutamate 5-phosphate into L-glutamate 5-semialdehyde and phosphate. The product spontaneously undergoes cyclization to form 1-pyrroline-5-carboxylate. The sequence is that of Gamma-glutamyl phosphate reductase from Rhodospirillum rubrum (strain ATCC 11170 / ATH 1.1.1 / DSM 467 / LMG 4362 / NCIMB 8255 / S1).